The sequence spans 184 residues: Casparian strip membrane protein 3 (184 aa).

Residues 1–22 (MEGSGEHGETSKGPLSKGVSRG) lie on the Cytoplasmic side of the membrane. A helical membrane pass occupies residues 23-43 (LCILDLIFRVIAVIGTLASAI). The Extracellular portion of the chain corresponds to 44–72 (AMGTTNQTMPFFTQFVQFKERYSDLPTLT). A glycan (N-linked (GlcNAc...) asparagine) is linked at N49. Residues 73–93 (FFVVANSIASAYLIISLPLSI) form a helical membrane-spanning segment. Over 94 to 105 (VHIIRSRAKYSR) the chain is Cytoplasmic. Residues 106–126 (LILIFFDVAMLALVTAAASAG) form a helical membrane-spanning segment. At 127–159 (AAIVYLAHNGNVSANWFAICQQFDSFCERISGS) the chain is on the extracellular side. N137 carries an N-linked (GlcNAc...) asparagine glycan. The helical transmembrane segment at 160-180 (LIGSFAAMVVLILLILLSAVA) threads the bilayer. Residues 181-184 (LARR) lie on the Cytoplasmic side of the membrane.

It belongs to the Casparian strip membrane proteins (CASP) family. In terms of assembly, homodimer and heterodimers.

It is found in the cell membrane. Its function is as follows. Regulates membrane-cell wall junctions and localized cell wall deposition. Required for establishment of the Casparian strip membrane domain (CSD) and the subsequent formation of Casparian strips, a cell wall modification of the root endodermis that determines an apoplastic barrier between the intraorganismal apoplasm and the extraorganismal apoplasm and prevents lateral diffusion. The sequence is that of Casparian strip membrane protein 3 from Brachypodium distachyon (Purple false brome).